Reading from the N-terminus, the 690-residue chain is Potassium-transporting ATPase ATP-binding subunit (690 aa).

The disordered stretch occupies residues 1–23 (MNSTSTVRQPGGPRQQRRHTPKA). Transmembrane regions (helical) follow at residues 44–64 (IMVK…TGML), 78–98 (AMFN…ANFA), 233–253 (IALT…VATL), and 268–288 (LLIA…LSAI). The 4-aspartylphosphate intermediate role is filled by D321. ATP is bound by residues D358, E362, 389–396 (FSARTRMS), and K408. Residues D531 and D535 each contribute to the Mg(2+) site. Helical transmembrane passes span 601-621 (FAII…IMDL), 627-647 (AVLS…PLAL), and 665-685 (ILVY…LIDL).

It belongs to the cation transport ATPase (P-type) (TC 3.A.3) family. Type IA subfamily. The system is composed of three essential subunits: KdpA, KdpB and KdpC.

Its subcellular location is the cell inner membrane. The catalysed reaction is K(+)(out) + ATP + H2O = K(+)(in) + ADP + phosphate + H(+). Functionally, part of the high-affinity ATP-driven potassium transport (or Kdp) system, which catalyzes the hydrolysis of ATP coupled with the electrogenic transport of potassium into the cytoplasm. This subunit is responsible for energy coupling to the transport system and for the release of the potassium ions to the cytoplasm. The polypeptide is Potassium-transporting ATPase ATP-binding subunit (Synechocystis sp. (strain ATCC 27184 / PCC 6803 / Kazusa)).